The primary structure comprises 435 residues: Endosome-associated-trafficking regulator 1 (435 aa).

Phosphoserine occurs at positions 18 and 147. Disordered stretches follow at residues 136–185 and 225–251; these read ASRH…TGWS and ESLPSWALSDTDSRVSPASPAGSPSAD. Acidic residues predominate over residues 173–182; it reads LLDEEEDEDT. Residues 173–198 are required for interaction with PTPN13; it reads LLDEEEDEDTGWSGAYLPSAIEQTHP. Over residues 240 to 250 the composition is skewed to low complexity; it reads SPASPAGSPSA. Residues Ser243 and Ser247 each carry the phosphoserine modification. The stretch at 261–371 forms a coiled coil; sequence DRHLRTLQIS…FQRENEALRC (111 aa).

This sequence belongs to the ENTR1 family. In terms of assembly, found in a complex with ENTR1, PTPN13 and GIT1. Interacts with PTPN13 (via the FERM domain). Interacts (via N-terminus) with GIT1 (via N- and C-terminus); this interaction is direct. Interacts with NOD2. Interacts (via N-terminus) with IFT88. Interacts with VPS35. In terms of processing, phosphorylated. Expressed in the colon (at protein level).

It localises to the cytoplasm. The protein localises to the early endosome. The protein resides in the endosome. It is found in the recycling endosome. Its subcellular location is the midbody. It localises to the cytoskeleton. The protein localises to the microtubule organizing center. The protein resides in the centrosome. It is found in the cilium basal body. Functionally, endosome-associated protein that plays a role in membrane receptor sorting, cytokinesis and ciliogenesis. Involved in the endosome-to-plasma membrane trafficking and recycling of SNX27-retromer-dependent cargo proteins, such as GLUT1. Involved in the regulation of cytokinesis; the function may involve PTPN13 and GIT1. Plays a role in the formation of cilia. Involved in cargo protein localization, such as PKD2, at primary cilia. Involved in the presentation of the tumor necrosis factor (TNF) receptor TNFRSF1A on the cell surface, and hence in the modulation of the TNF-induced apoptosis. The sequence is that of Endosome-associated-trafficking regulator 1 from Homo sapiens (Human).